A 426-amino-acid polypeptide reads, in one-letter code: Arrestin domain-containing protein 17 (426 aa).

Residues 320 to 329 are compositionally biased toward polar residues; sequence QSAGNGSLPK. The tract at residues 320 to 340 is disordered; that stretch reads QSAGNGSLPKSSIKDSPPKWD. Residues 331–340 show a composition bias toward basic and acidic residues; it reads SIKDSPPKWD.

The protein belongs to the arrestin family. Interacts with tax-6. Post-translationally, phosphorylated. Dephosphorylated by tax-6 in vitro. Expressed from the comma stage to adulthood in the nervous system, including sensory neurons and interneurons posterior to the nerve ring, dorsal and ventral nerve cords, tail ganglia and, CEP, HSN, ASK, ADL, ASH and ASJ neurons.

In terms of biological role, involved in several behavioral responses including chemotaxis towards lysine and adaptation to repeated osmotic stress. In addition, plays a role in resuming egg-laying and locomotion after starvation. This chain is Arrestin domain-containing protein 17, found in Caenorhabditis elegans.